The following is a 473-amino-acid chain: Adenosylhomocysteinase (473 aa).

Substrate-binding residues include T60, D135, and E197. 198 to 200 is an NAD(+) binding site; it reads TTT. Positions 227 and 231 each coordinate substrate. Residues N232, 261-266, E284, N319, 340-342, and N385 each bind NAD(+); these read GFGDVG and IGH.

The protein belongs to the adenosylhomocysteinase family. Requires NAD(+) as cofactor.

It is found in the cytoplasm. The enzyme catalyses S-adenosyl-L-homocysteine + H2O = L-homocysteine + adenosine. It participates in amino-acid biosynthesis; L-homocysteine biosynthesis; L-homocysteine from S-adenosyl-L-homocysteine: step 1/1. In terms of biological role, may play a key role in the regulation of the intracellular concentration of adenosylhomocysteine. The polypeptide is Adenosylhomocysteinase (Bradyrhizobium sp. (strain BTAi1 / ATCC BAA-1182)).